We begin with the raw amino-acid sequence, 467 residues long: Chromosomal replication initiator protein DnaA (467 aa).

The interval 1-79 (MTELDQFWPA…GELPVELRLG (79 aa)) is domain I, interacts with DnaA modulators. The segment at 79 to 129 (GAPTARPAAPVAGNSQPKAKEPAKAAASAPAAPSPAKQAAVKAIGGSHEST) is domain II. The tract at residues 84 to 126 (RPAAPVAGNSQPKAKEPAKAAASAPAAPSPAKQAAVKAIGGSH) is disordered. A compositionally biased stretch (low complexity) spans 102–121 (KAAASAPAAPSPAKQAAVKA). The tract at residues 130–347 (RLNPSFTFDT…GALKRVVAYA (218 aa)) is domain III, AAA+ region. Residues Gly-175, Gly-177, Lys-178, and Thr-179 each contribute to the ATP site. The tract at residues 348-467 (RFTSQNITLE…YEALLSMLRN (120 aa)) is domain IV, binds dsDNA.

This sequence belongs to the DnaA family. In terms of assembly, oligomerizes as a right-handed, spiral filament on DNA at oriC.

It is found in the cytoplasm. Its function is as follows. Plays an essential role in the initiation and regulation of chromosomal replication. ATP-DnaA binds to the origin of replication (oriC) to initiate formation of the DNA replication initiation complex once per cell cycle. Binds the DnaA box (a 9 base pair repeat at the origin) and separates the double-stranded (ds)DNA. Forms a right-handed helical filament on oriC DNA; dsDNA binds to the exterior of the filament while single-stranded (ss)DNA is stabiized in the filament's interior. The ATP-DnaA-oriC complex binds and stabilizes one strand of the AT-rich DNA unwinding element (DUE), permitting loading of DNA polymerase. After initiation quickly degrades to an ADP-DnaA complex that is not apt for DNA replication. Binds acidic phospholipids. This is Chromosomal replication initiator protein DnaA from Chromobacterium violaceum (strain ATCC 12472 / DSM 30191 / JCM 1249 / CCUG 213 / NBRC 12614 / NCIMB 9131 / NCTC 9757 / MK).